Here is a 542-residue protein sequence, read N- to C-terminus: Chaperonin GroEL (542 aa).

Residues 29-32, 86-90, Gly-413, 476-478, and Asp-492 contribute to the ATP site; these read TLGP, DGTTT, and NAA. The interval 522 to 542 is disordered; sequence PDENGPAAVPDMGMGGMGGMM.

It belongs to the chaperonin (HSP60) family. In terms of assembly, forms a cylinder of 14 subunits composed of two heptameric rings stacked back-to-back. Interacts with the co-chaperonin GroES.

The protein localises to the cytoplasm. The enzyme catalyses ATP + H2O + a folded polypeptide = ADP + phosphate + an unfolded polypeptide.. Together with its co-chaperonin GroES, plays an essential role in assisting protein folding. The GroEL-GroES system forms a nano-cage that allows encapsulation of the non-native substrate proteins and provides a physical environment optimized to promote and accelerate protein folding. This chain is Chaperonin GroEL, found in Listeria monocytogenes serotype 4a (strain HCC23).